Reading from the N-terminus, the 415-residue chain is Serine hydroxymethyltransferase (415 aa).

Residues L117 and 121–123 (GHL) each bind (6S)-5,6,7,8-tetrahydrofolate. K226 carries the N6-(pyridoxal phosphate)lysine modification.

This sequence belongs to the SHMT family. As to quaternary structure, homodimer. It depends on pyridoxal 5'-phosphate as a cofactor.

The protein localises to the cytoplasm. It carries out the reaction (6R)-5,10-methylene-5,6,7,8-tetrahydrofolate + glycine + H2O = (6S)-5,6,7,8-tetrahydrofolate + L-serine. Its pathway is one-carbon metabolism; tetrahydrofolate interconversion. The protein operates within amino-acid biosynthesis; glycine biosynthesis; glycine from L-serine: step 1/1. Its function is as follows. Catalyzes the reversible interconversion of serine and glycine with tetrahydrofolate (THF) serving as the one-carbon carrier. This reaction serves as the major source of one-carbon groups required for the biosynthesis of purines, thymidylate, methionine, and other important biomolecules. Also exhibits THF-independent aldolase activity toward beta-hydroxyamino acids, producing glycine and aldehydes, via a retro-aldol mechanism. This Dehalococcoides mccartyi (strain ATCC BAA-2266 / KCTC 15142 / 195) (Dehalococcoides ethenogenes (strain 195)) protein is Serine hydroxymethyltransferase.